Consider the following 438-residue polypeptide: Serine--tRNA ligase (438 aa).

245-247 (TAE) serves as a coordination point for L-serine. 276–278 (RSE) provides a ligand contact to ATP. Glu-299 provides a ligand contact to L-serine. 363 to 366 (EISS) contacts ATP. Residue Ser-398 coordinates L-serine.

This sequence belongs to the class-II aminoacyl-tRNA synthetase family. Type-1 seryl-tRNA synthetase subfamily. Homodimer. The tRNA molecule binds across the dimer.

It localises to the cytoplasm. The enzyme catalyses tRNA(Ser) + L-serine + ATP = L-seryl-tRNA(Ser) + AMP + diphosphate + H(+). It catalyses the reaction tRNA(Sec) + L-serine + ATP = L-seryl-tRNA(Sec) + AMP + diphosphate + H(+). It participates in aminoacyl-tRNA biosynthesis; selenocysteinyl-tRNA(Sec) biosynthesis; L-seryl-tRNA(Sec) from L-serine and tRNA(Sec): step 1/1. Its function is as follows. Catalyzes the attachment of serine to tRNA(Ser). Is also able to aminoacylate tRNA(Sec) with serine, to form the misacylated tRNA L-seryl-tRNA(Sec), which will be further converted into selenocysteinyl-tRNA(Sec). In Delftia acidovorans (strain DSM 14801 / SPH-1), this protein is Serine--tRNA ligase.